The primary structure comprises 224 residues: Testis-expressed protein 30 (224 aa).

The chain is Testis-expressed protein 30 (TEX30) from Bos taurus (Bovine).